Consider the following 318-residue polypeptide: Pyrimidine-specific ribonucleoside hydrolase RihA (318 aa).

His-240 is an active-site residue.

Belongs to the IUNH family. RihA subfamily.

Hydrolyzes cytidine or uridine to ribose and cytosine or uracil, respectively. In Shewanella sp. (strain ANA-3), this protein is Pyrimidine-specific ribonucleoside hydrolase RihA.